Here is a 367-residue protein sequence, read N- to C-terminus: Ribosomal RNA large subunit methyltransferase M (367 aa).

Residues S189, 222–225, D241, D261, and D278 each bind S-adenosyl-L-methionine; that span reads CPGG. K307 acts as the Proton acceptor in catalysis.

The protein belongs to the class I-like SAM-binding methyltransferase superfamily. RNA methyltransferase RlmE family. RlmM subfamily. In terms of assembly, monomer.

Its subcellular location is the cytoplasm. It catalyses the reaction cytidine(2498) in 23S rRNA + S-adenosyl-L-methionine = 2'-O-methylcytidine(2498) in 23S rRNA + S-adenosyl-L-homocysteine + H(+). Catalyzes the 2'-O-methylation at nucleotide C2498 in 23S rRNA. This is Ribosomal RNA large subunit methyltransferase M from Shewanella denitrificans (strain OS217 / ATCC BAA-1090 / DSM 15013).